Reading from the N-terminus, the 257-residue chain is tRNA (guanine-N(1)-)-methyltransferase (257 aa).

S-adenosyl-L-methionine contacts are provided by residues Gly117 and 137–142 (LGDFVL).

Belongs to the RNA methyltransferase TrmD family. In terms of assembly, homodimer.

It is found in the cytoplasm. It catalyses the reaction guanosine(37) in tRNA + S-adenosyl-L-methionine = N(1)-methylguanosine(37) in tRNA + S-adenosyl-L-homocysteine + H(+). Functionally, specifically methylates guanosine-37 in various tRNAs. In Bordetella parapertussis (strain 12822 / ATCC BAA-587 / NCTC 13253), this protein is tRNA (guanine-N(1)-)-methyltransferase.